Consider the following 197-residue polypeptide: Putative peptidyl-prolyl cis-trans isomerase (197 aa).

The region spanning Gly14–Val195 is the PPIase cyclophilin-type domain.

It belongs to the cyclophilin-type PPIase family.

The enzyme catalyses [protein]-peptidylproline (omega=180) = [protein]-peptidylproline (omega=0). In terms of biological role, PPIases accelerate the folding of proteins. It catalyzes the cis-trans isomerization of proline imidic peptide bonds in oligopeptides. The polypeptide is Putative peptidyl-prolyl cis-trans isomerase (Staphylococcus aureus (strain bovine RF122 / ET3-1)).